Here is a 353-residue protein sequence, read N- to C-terminus: MNLVVLQNWLDNASFAILFLTMLVYWGGAAFPNLPYLAALGTAGMAIANLCMATLLGARWIEAGYFPLSNLYESLFFLTWGITTVHLIAESSSRSRLVGVVTAPVAMLIAAFATMTLPSQMQASEPLVPALKSNWLMMHVSVMMLSYSALMVGALLAIAFLIVTRGQNIQLQGSSVGTGGYRSNGYRLHKAAELISQPPAPSAENNGFARFESSSNGNGNANTAVLNLVTTSEPQTVASAEPLSPQRLSLAETLDNISYRIIGLGFPLLTIGIIAGGVWANEAWGSYWSWDPKETWALITWLVFAAYLHARITRGWQGRRPAILAATGFVVVWICYLGVNLLGKGLHSYGWFF.

8 helical membrane-spanning segments follow: residues 15 to 35, 37 to 57, 68 to 88, 97 to 117, 142 to 162, 261 to 281, 288 to 308, and 322 to 342; these read FAIL…PNLP, LAAL…TLLG, LSNL…VHLI, LVGV…TMTL, VMML…AFLI, IIGL…VWAN, WSWD…AAYL, and AILA…VNLL.

It belongs to the CcmF/CycK/Ccl1/NrfE/CcsA family. In terms of assembly, may interact with ccs1.

It localises to the cellular thylakoid membrane. Functionally, required during biogenesis of c-type cytochromes (cytochrome c6 and cytochrome f) at the step of heme attachment. In Nostoc punctiforme (strain ATCC 29133 / PCC 73102), this protein is Cytochrome c biogenesis protein CcsA.